A 129-amino-acid polypeptide reads, in one-letter code: Large ribosomal subunit protein bL12 (129 aa).

The protein belongs to the bacterial ribosomal protein bL12 family. As to quaternary structure, homodimer. Part of the ribosomal stalk of the 50S ribosomal subunit. Forms a multimeric L10(L12)X complex, where L10 forms an elongated spine to which 2 to 4 L12 dimers bind in a sequential fashion. Binds GTP-bound translation factors.

In terms of biological role, forms part of the ribosomal stalk which helps the ribosome interact with GTP-bound translation factors. Is thus essential for accurate translation. This Mycobacteroides abscessus (strain ATCC 19977 / DSM 44196 / CCUG 20993 / CIP 104536 / JCM 13569 / NCTC 13031 / TMC 1543 / L948) (Mycobacterium abscessus) protein is Large ribosomal subunit protein bL12.